Here is a 155-residue protein sequence, read N- to C-terminus: Small ribosomal subunit protein uS7c (155 aa).

Belongs to the universal ribosomal protein uS7 family. As to quaternary structure, part of the 30S ribosomal subunit.

It localises to the plastid. It is found in the chloroplast. One of the primary rRNA binding proteins, it binds directly to 16S rRNA where it nucleates assembly of the head domain of the 30S subunit. In Metasequoia glyptostroboides (Dawn redwood), this protein is Small ribosomal subunit protein uS7c (rps7).